We begin with the raw amino-acid sequence, 595 residues long: MSKKKEEAKALRTPIVAVLGHVDHGKTTLLDRIRKSKVVAKEAGGITQHIGATEVPLDVIKQICKDIWKVEVKIPGLLFIDTPGHKAFTNLRRRGGALADLAILIVDINEGFKPQTEEALSILRTFKTPFVVAANKIDRIPGWQSHEDTPFMKSYAMQEDFAKQNLENRLYNLIAELYQRGFSAERFDRISDFTRTVAVVPISALKGEGIPELLLILVGLAQRYLEKNLRLHIEGKGRGTVLEVKEERGLGVTCDAILYDGTLKVGDRIAIAGKDEVIVTNVKAILKPPPVREMRVESKFQSVKSVTAAAGIKIVAPNLENVLAGSEFEVVESEEDIKKFEERVRKEYEEIAIRTDEEGVVLKTDTLGSLEALINELRQEGIPIKKAEVGDVDKRDVVDASANKDELNKVVLAFNVKLLPGVEEEAKKYGVRIFSHEIIYTLIESFVKWREEERLARERQKVEALIKPGKIKLLKEFIFRRSKPAIVGVRVLAGELRRGVDLIKPDGTKVGAVRTMQKEGKNVAIASAGDELAIAIEDVTIGRQLEGDEELYVDVPERHAKVIERDLLDSLDEETKRAFKEFLEIKRKDNPFWGK.

Residues 11-225 form the tr-type G domain; it reads LRTPIVAVLG…ILVGLAQRYL (215 aa). The interval 20 to 27 is G1; it reads GHVDHGKT. Position 20-27 (20-27) interacts with GTP; that stretch reads GHVDHGKT. The G2 stretch occupies residues 45–49; that stretch reads GITQH. The interval 81–84 is G3; sequence DTPG. GTP is bound by residues 81–85 and 135–138; these read DTPGH and NKID. The segment at 135–138 is G4; that stretch reads NKID. The tract at residues 203 to 205 is G5; the sequence is SAL.

Belongs to the TRAFAC class translation factor GTPase superfamily. Classic translation factor GTPase family. IF-2 subfamily.

In terms of biological role, function in general translation initiation by promoting the binding of the formylmethionine-tRNA to ribosomes. Seems to function along with eIF-2. The protein is Probable translation initiation factor IF-2 (infB) of Archaeoglobus fulgidus (strain ATCC 49558 / DSM 4304 / JCM 9628 / NBRC 100126 / VC-16).